The chain runs to 436 residues: GTPase Der (436 aa).

EngA-type G domains are found at residues 4-167 (PIVA…PDEA) and 175-351 (IRFS…DNHR). Residues 10-17 (GRPNVGKS), 57-61 (DTGGI), 119-122 (NKVD), 181-188 (GRPNVGKS), 229-233 (DTAGM), and 294-297 (NKWD) contribute to the GTP site. A KH-like domain is found at 352 to 436 (KRITSSTLND…PIKLIVRARK (85 aa)).

Belongs to the TRAFAC class TrmE-Era-EngA-EngB-Septin-like GTPase superfamily. EngA (Der) GTPase family. As to quaternary structure, associates with the 50S ribosomal subunit.

Its function is as follows. GTPase that plays an essential role in the late steps of ribosome biogenesis. This is GTPase Der from Leuconostoc mesenteroides subsp. mesenteroides (strain ATCC 8293 / DSM 20343 / BCRC 11652 / CCM 1803 / JCM 6124 / NCDO 523 / NBRC 100496 / NCIMB 8023 / NCTC 12954 / NRRL B-1118 / 37Y).